A 126-amino-acid polypeptide reads, in one-letter code: Putative phosphotransferase enzyme IIB component UU178 (126 aa).

The helical transmembrane segment at 11 to 31 (LIIFLGIITFGIFIIYFFTKA) threads the bilayer. One can recognise a PTS EIIB type-1 domain in the interval 49-126 (PFSLNDFYNC…KELIKKDLFS (78 aa)).

This sequence to M.genitalium MG129 and M.pneumoniae MPN268.

Its subcellular location is the membrane. Functionally, the phosphoenolpyruvate-dependent sugar phosphotransferase system (PTS), a major carbohydrate active -transport system, catalyzes the phosphorylation of incoming sugar substrates concomitant with their translocation across the cell membrane. This Ureaplasma parvum serovar 3 (strain ATCC 700970) protein is Putative phosphotransferase enzyme IIB component UU178.